The primary structure comprises 39 residues: SPbeta prophage-derived uncharacterized protein YorT (39 aa).

This Bacillus subtilis (strain 168) protein is SPbeta prophage-derived uncharacterized protein YorT (yorT).